Reading from the N-terminus, the 398-residue chain is Lipase member K (398 aa).

The signal sequence occupies residues 1–19 (MWWLLATTCCVLLSGPIDG). The AB hydrolase-1 domain maps to 78–377 (VVYLQHGLIA…HYNHMDFYLG (300 aa)). S171 (nucleophile) is an active-site residue. The cysteines at positions 245 and 254 are disulfide-linked. N-linked (GlcNAc...) asparagine glycosylation is found at N270 and N326. Residues D342 and H371 each act as charge relay system in the active site.

The protein belongs to the AB hydrolase superfamily. Lipase family.

The protein localises to the secreted. In terms of biological role, plays a highly specific role in the last step of keratinocyte differentiation. May have an essential function in lipid metabolism of the most differentiated epidermal layers. In Mus musculus (Mouse), this protein is Lipase member K (Lipk).